Consider the following 354-residue polypeptide: NADH-quinone oxidoreductase subunit H (354 aa).

Helical transmembrane passes span 25 to 45 (LVRI…LILW), 91 to 111 (WVYL…WAVI), 126 to 146 (LLYA…AGWA), 170 to 190 (MGFA…SDIV), 205 to 225 (FLSW…VSGI), 257 to 277 (LFFL…SILF), 290 to 310 (FIPG…VFIW), and 330 to 350 (VFLP…MSPL).

The protein belongs to the complex I subunit 1 family. NDH-1 is composed of 14 different subunits. Subunits NuoA, H, J, K, L, M, N constitute the membrane sector of the complex.

Its subcellular location is the cell inner membrane. The catalysed reaction is a quinone + NADH + 5 H(+)(in) = a quinol + NAD(+) + 4 H(+)(out). In terms of biological role, NDH-1 shuttles electrons from NADH, via FMN and iron-sulfur (Fe-S) centers, to quinones in the respiratory chain. The immediate electron acceptor for the enzyme in this species is believed to be ubiquinone. Couples the redox reaction to proton translocation (for every two electrons transferred, four hydrogen ions are translocated across the cytoplasmic membrane), and thus conserves the redox energy in a proton gradient. This subunit may bind ubiquinone. In Paraburkholderia phymatum (strain DSM 17167 / CIP 108236 / LMG 21445 / STM815) (Burkholderia phymatum), this protein is NADH-quinone oxidoreductase subunit H.